The primary structure comprises 85 residues: UPF0291 protein SPH_1589 (85 aa).

The tract at residues 62 to 85 (TPEKLRQVQREKGLHGRSLDDPNS) is disordered.

The protein belongs to the UPF0291 family.

The protein resides in the cytoplasm. This is UPF0291 protein SPH_1589 from Streptococcus pneumoniae (strain Hungary19A-6).